A 301-amino-acid polypeptide reads, in one-letter code: 33 kDa chaperonin (301 aa).

2 disulfides stabilise this stretch: cysteine 239–cysteine 241 and cysteine 272–cysteine 275.

This sequence belongs to the HSP33 family. Under oxidizing conditions two disulfide bonds are formed involving the reactive cysteines. Under reducing conditions zinc is bound to the reactive cysteines and the protein is inactive.

It localises to the cytoplasm. Functionally, redox regulated molecular chaperone. Protects both thermally unfolding and oxidatively damaged proteins from irreversible aggregation. Plays an important role in the bacterial defense system toward oxidative stress. This is 33 kDa chaperonin from Trichormus variabilis (strain ATCC 29413 / PCC 7937) (Anabaena variabilis).